A 199-amino-acid chain; its full sequence is Pyridoxal 5'-phosphate synthase subunit PdxT (199 aa).

An L-glutamine-binding site is contributed by glycine 49 to serine 51. Cysteine 81 functions as the Nucleophile in the catalytic mechanism. Residues arginine 110 and isoleucine 139–arginine 140 contribute to the L-glutamine site. Residues histidine 175 and glutamate 177 each act as charge relay system in the active site.

It belongs to the glutaminase PdxT/SNO family. In the presence of PdxS, forms a dodecamer of heterodimers. Only shows activity in the heterodimer.

The enzyme catalyses aldehydo-D-ribose 5-phosphate + D-glyceraldehyde 3-phosphate + L-glutamine = pyridoxal 5'-phosphate + L-glutamate + phosphate + 3 H2O + H(+). The catalysed reaction is L-glutamine + H2O = L-glutamate + NH4(+). It functions in the pathway cofactor biosynthesis; pyridoxal 5'-phosphate biosynthesis. Catalyzes the hydrolysis of glutamine to glutamate and ammonia as part of the biosynthesis of pyridoxal 5'-phosphate. The resulting ammonia molecule is channeled to the active site of PdxS. The polypeptide is Pyridoxal 5'-phosphate synthase subunit PdxT (Frankia casuarinae (strain DSM 45818 / CECT 9043 / HFP020203 / CcI3)).